The following is a 545-amino-acid chain: Chaperonin GroEL (545 aa).

ATP is bound by residues 30–33 (TLGP), lysine 51, 87–91 (DGTTT), glycine 415, and aspartate 496.

Belongs to the chaperonin (HSP60) family. Forms a cylinder of 14 subunits composed of two heptameric rings stacked back-to-back. Interacts with the co-chaperonin GroES.

Its subcellular location is the cytoplasm. It carries out the reaction ATP + H2O + a folded polypeptide = ADP + phosphate + an unfolded polypeptide.. Its function is as follows. Together with its co-chaperonin GroES, plays an essential role in assisting protein folding. The GroEL-GroES system forms a nano-cage that allows encapsulation of the non-native substrate proteins and provides a physical environment optimized to promote and accelerate protein folding. The chain is Chaperonin GroEL from Chlorobaculum tepidum (strain ATCC 49652 / DSM 12025 / NBRC 103806 / TLS) (Chlorobium tepidum).